A 172-amino-acid polypeptide reads, in one-letter code: dCTP pyrophosphatase (172 aa).

It catalyses the reaction dCTP + H2O = dCMP + diphosphate + H(+). This Enterobacteria phage LZ5 (Bacteriophage LZ5) protein is dCTP pyrophosphatase (56).